Reading from the N-terminus, the 210-residue chain is Probable GTP-binding protein EngB (210 aa).

The EngB-type G domain occupies 25–199; that stretch reads TGIEVAFAGR…RQKLDSWFNE (175 aa). Residues 33–40, 60–64, 78–81, 145–148, and 178–180 contribute to the GTP site; these read GRSNAGKS, GRTQL, DLPG, TKAD, and FSS. 2 residues coordinate Mg(2+): Ser-40 and Thr-62.

Belongs to the TRAFAC class TrmE-Era-EngA-EngB-Septin-like GTPase superfamily. EngB GTPase family. The cofactor is Mg(2+).

Its function is as follows. Necessary for normal cell division and for the maintenance of normal septation. The polypeptide is Probable GTP-binding protein EngB (Klebsiella pneumoniae subsp. pneumoniae (strain ATCC 700721 / MGH 78578)).